Reading from the N-terminus, the 433-residue chain is MSKIAKILAREIIDSRGNPTVEVEAHLEGGFIGLAAAPSGASTGSREALELRDGNPARFLGKGVLKAVEAVNGSIAQALLGKDAKDQQHIDQLMIDLDGTENKSHFGANAILAVSLAVAKAGAASKGMPLYEHIAELHGTPGQFSMPLPMMNIINGGEHADNNIDIQEFMIQPVGAKSFKEAVRMGSEVFHHLAKVLKSKNLSTAVGDEGGYAPNLESNAAALETMKEAVEKAGYVLGKDITFAMDCAASEFYNKETNRYELKGEGKTFTSEEFTHFLENLTQKYPIISIEDGLDESDWEGFKYQTQVLGDKIQLVGDDLFVTNTQILKEGIQKKIANSILIKFNQIGSLTETLAAIKMAQEAGYTAIISHRSGETEDATIADLAVGTSAGQIKTGSMSRSDRVAKYNQLIRIEEALGERALFNGLKEVKGQS.

Residue Gln167 participates in (2R)-2-phosphoglycerate binding. The Proton donor role is filled by Glu209. Residues Asp246, Glu291, and Asp318 each contribute to the Mg(2+) site. Lys343, Arg372, Ser373, and Lys394 together coordinate (2R)-2-phosphoglycerate. Lys343 serves as the catalytic Proton acceptor.

The protein belongs to the enolase family. In terms of assembly, component of the RNA degradosome, a multiprotein complex involved in RNA processing and mRNA degradation. It depends on Mg(2+) as a cofactor.

It is found in the cytoplasm. It localises to the secreted. Its subcellular location is the cell surface. It carries out the reaction (2R)-2-phosphoglycerate = phosphoenolpyruvate + H2O. The protein operates within carbohydrate degradation; glycolysis; pyruvate from D-glyceraldehyde 3-phosphate: step 4/5. Functionally, catalyzes the reversible conversion of 2-phosphoglycerate (2-PG) into phosphoenolpyruvate (PEP). It is essential for the degradation of carbohydrates via glycolysis. This chain is Enolase, found in Hamiltonella defensa subsp. Acyrthosiphon pisum (strain 5AT).